Reading from the N-terminus, the 371-residue chain is Putative RNA-binding protein Luc7-like 1 (371 aa).

2 coiled-coil regions span residues 87–177 (MDHL…RNSM) and 220–256 (QIREKLDQLRKTVAEKQEKRNQDRLRRREEREREERL). Residues 232 to 257 (VAEKQEKRNQDRLRRREEREREERLG) are compositionally biased toward basic and acidic residues. The interval 232 to 371 (VAEKQEKRNQ…RSEEKEAGEI (140 aa)) is disordered. Residues 258 to 317 (RRSGSRTRDRRRSRSRDRRRRRSRSTSRERRKFSRSRSRDRYRRHRSRSRSHSRGHRRAS) show a composition bias toward basic residues. 2 stretches are compositionally biased toward basic and acidic residues: residues 318–351 (RDRSTKYKFSRERSLREESWEYGRNERGPTDWRL) and 361–371 (RRSEEKEAGEI). S336 and S363 each carry phosphoserine.

It belongs to the Luc7 family.

May bind to RNA via its Arg/Ser-rich domain. In Mus musculus (Mouse), this protein is Putative RNA-binding protein Luc7-like 1 (Luc7l).